We begin with the raw amino-acid sequence, 227 residues long: Cytochrome c oxidase subunit 2 (227 aa).

At 1–14 (MAYPFQLGLQDATS) the chain is on the mitochondrial intermembrane side. Residues 15-45 (PIMEELTNFHDHTLMIVFLISSLVLYIISLM) form a helical membrane-spanning segment. At 46-59 (LTTKLTHTSTMDAQ) the chain is on the mitochondrial matrix side. The chain crosses the membrane as a helical span at residues 60 to 87 (EVETIWTILPAVILILIALPSLRILYMM). The Mitochondrial intermembrane segment spans residues 88-227 (DEINNPVLTV…HFENWSTSMI (140 aa)). Residues H161, C196, E198, C200, H204, and M207 each coordinate Cu cation. A Mg(2+)-binding site is contributed by E198.

The protein belongs to the cytochrome c oxidase subunit 2 family. In terms of assembly, component of the cytochrome c oxidase (complex IV, CIV), a multisubunit enzyme composed of 14 subunits. The complex is composed of a catalytic core of 3 subunits MT-CO1, MT-CO2 and MT-CO3, encoded in the mitochondrial DNA, and 11 supernumerary subunits COX4I, COX5A, COX5B, COX6A, COX6B, COX6C, COX7A, COX7B, COX7C, COX8 and NDUFA4, which are encoded in the nuclear genome. The complex exists as a monomer or a dimer and forms supercomplexes (SCs) in the inner mitochondrial membrane with NADH-ubiquinone oxidoreductase (complex I, CI) and ubiquinol-cytochrome c oxidoreductase (cytochrome b-c1 complex, complex III, CIII), resulting in different assemblies (supercomplex SCI(1)III(2)IV(1) and megacomplex MCI(2)III(2)IV(2)). Found in a complex with TMEM177, COA6, COX18, COX20, SCO1 and SCO2. Interacts with TMEM177 in a COX20-dependent manner. Interacts with COX20. Interacts with COX16. Cu cation serves as cofactor.

Its subcellular location is the mitochondrion inner membrane. The enzyme catalyses 4 Fe(II)-[cytochrome c] + O2 + 8 H(+)(in) = 4 Fe(III)-[cytochrome c] + 2 H2O + 4 H(+)(out). In terms of biological role, component of the cytochrome c oxidase, the last enzyme in the mitochondrial electron transport chain which drives oxidative phosphorylation. The respiratory chain contains 3 multisubunit complexes succinate dehydrogenase (complex II, CII), ubiquinol-cytochrome c oxidoreductase (cytochrome b-c1 complex, complex III, CIII) and cytochrome c oxidase (complex IV, CIV), that cooperate to transfer electrons derived from NADH and succinate to molecular oxygen, creating an electrochemical gradient over the inner membrane that drives transmembrane transport and the ATP synthase. Cytochrome c oxidase is the component of the respiratory chain that catalyzes the reduction of oxygen to water. Electrons originating from reduced cytochrome c in the intermembrane space (IMS) are transferred via the dinuclear copper A center (CU(A)) of subunit 2 and heme A of subunit 1 to the active site in subunit 1, a binuclear center (BNC) formed by heme A3 and copper B (CU(B)). The BNC reduces molecular oxygen to 2 water molecules using 4 electrons from cytochrome c in the IMS and 4 protons from the mitochondrial matrix. In Praomys taitae (Taita hill rat), this protein is Cytochrome c oxidase subunit 2 (MT-CO2).